A 458-amino-acid polypeptide reads, in one-letter code: F-box/WD repeat-containing protein 9 (458 aa).

Residue M1 is modified to N-acetylmethionine. A disordered region spans residues 1-28 (MELPPGPRDDPHAWDDDSDPELEPDTDA). Residues 16 to 28 (DDSDPELEPDTDA) show a composition bias toward acidic residues. Residues S18 and S59 each carry the phosphoserine modification. Positions 76 to 123 (VPGLLSLPPELLLEICAYLDARLVLHVLPRVCHALRDLVRDRVTWRLR) constitute an F-box domain. 7 WD repeats span residues 171–210 (GHFASIDSVLLLQGGTLCLSGSRDRNVNLWDLQQLGVEPS), 224–261 (THKGWVWSLAALDHRVCSGSWDSTVKLWDMAADGQQFG), 264–301 (KGKAAVLCLSYRPDILVTGTYDKKVTVYDPRVGPALLK), 305–342 (LHSSAVLALLADDRHIISGSEDHTLVVFDRRANSVLQR), 344–381 (QLDSYLLCMSYQEPQLWAGDNQGLLHVFANRSGCFQLV), 387–424 (GHRSQITGIKHSLGALYTTSTDKTIRVHVPTDPPRTIC), and 427–458 (SHHNVLNGICAEGNLVVAASGGLSLEVWRLQA).

Interacts with SKP1 and CUL1.

In terms of biological role, substrate-recognition component of the SCF (SKP1-CUL1-F-box protein)-type E3 ubiquitin ligase complex. In Bos taurus (Bovine), this protein is F-box/WD repeat-containing protein 9 (FBXW9).